The sequence spans 177 residues: Shikimate kinase (177 aa).

Position 17–22 (17–22 (GVGKTT)) interacts with ATP. Residue T21 coordinates Mg(2+). Residues D39, R63, and G86 each coordinate substrate. R125 lines the ATP pocket. R143 provides a ligand contact to substrate. R159 serves as a coordination point for ATP.

The protein belongs to the shikimate kinase family. As to quaternary structure, monomer. It depends on Mg(2+) as a cofactor.

Its subcellular location is the cytoplasm. It catalyses the reaction shikimate + ATP = 3-phosphoshikimate + ADP + H(+). It participates in metabolic intermediate biosynthesis; chorismate biosynthesis; chorismate from D-erythrose 4-phosphate and phosphoenolpyruvate: step 5/7. In terms of biological role, catalyzes the specific phosphorylation of the 3-hydroxyl group of shikimic acid using ATP as a cosubstrate. The polypeptide is Shikimate kinase (Bacillus licheniformis (strain ATCC 14580 / DSM 13 / JCM 2505 / CCUG 7422 / NBRC 12200 / NCIMB 9375 / NCTC 10341 / NRRL NRS-1264 / Gibson 46)).